Consider the following 533-residue polypeptide: Suppressor of cytokine signaling 6 (533 aa).

Disordered stretches follow at residues 54-136 and 177-199; these read CDIG…WPLR and ELRDLQPEPRPESRCSPSSPGDL. Residues 59 to 69 are compositionally biased toward basic and acidic residues; that stretch reads EDEKGKNRSKS. Residues 76-88 show a composition bias toward basic residues; the sequence is LKRRLSAKQKTKG. A compositionally biased stretch (basic and acidic residues) spans 177 to 189; sequence ELRDLQPEPRPES. The SH2 domain occupies 382–489; that stretch reads WYWGPITRWE…TYPVRLTNPV (108 aa). The SOCS box domain occupies 484–533; that stretch reads RLTNPVSRFMQVRSLQYLCRFVIRQYTRIDLIQKLPLPNKMKDYLQEKHY.

Interacts with KIT (phosphorylated). Interacts with RBCK1. Interacts with phosphorylated IRS4. Interacts with PIM3.

It functions in the pathway protein modification; protein ubiquitination. In terms of biological role, SOCS family proteins form part of a classical negative feedback system that regulates cytokine signal transduction. May be a substrate recognition component of a SCF-like ECS (Elongin BC-CUL2/5-SOCS-box protein) E3 ubiquitin-protein ligase complex which mediates the ubiquitination and subsequent proteasomal degradation of target proteins. Regulates KIT degradation by ubiquitination of the tyrosine-phosphorylated receptor. In Mus musculus (Mouse), this protein is Suppressor of cytokine signaling 6 (Socs6).